The primary structure comprises 736 residues: Subtilisin-like protease SBT1.9 (736 aa).

Positions 1 to 20 are cleaved as a signal peptide; sequence MGMTVVIILVFSFFVAIVTA. Positions 21 to 101 are cleaved as a propeptide — activation peptide; it reads ETSPYIIHMD…FTKDLPVKLH (81 aa). In terms of domain architecture, Inhibitor I9 spans 25-101; it reads YIIHMDLSAK…FTKDLPVKLH (77 aa). In terms of domain architecture, Peptidase S8 spans 103–582; sequence TFSPKFIGLN…AGHVSTNKVL (480 aa). A glycan (N-linked (GlcNAc...) asparagine) is linked at asparagine 112. Aspartate 133 acts as the Charge relay system in catalysis. Asparagine 162 carries N-linked (GlcNAc...) asparagine glycosylation. Histidine 205 functions as the Charge relay system in the catalytic mechanism. Asparagine 220, asparagine 381, and asparagine 453 each carry an N-linked (GlcNAc...) asparagine glycan. In terms of domain architecture, PA spans 367–441; the sequence is VQFPVTYIES…VAFIGSKHRE (75 aa). Serine 529 serves as the catalytic Charge relay system. Asparagine 617 carries an N-linked (GlcNAc...) asparagine glycan.

Belongs to the peptidase S8 family.

The protein resides in the secreted. This is Subtilisin-like protease SBT1.9 from Arabidopsis thaliana (Mouse-ear cress).